The chain runs to 346 residues: Biotin synthase (346 aa).

Residues 38-256 enclose the Radical SAM core domain; it reads RQVQVSTLLS…IAVARIMMPT (219 aa). Cysteine 53, cysteine 57, and cysteine 60 together coordinate [4Fe-4S] cluster. The [2Fe-2S] cluster site is built by cysteine 97, cysteine 128, cysteine 188, and arginine 260.

It belongs to the radical SAM superfamily. Biotin synthase family. Homodimer. The cofactor is [4Fe-4S] cluster. [2Fe-2S] cluster serves as cofactor.

It catalyses the reaction (4R,5S)-dethiobiotin + (sulfur carrier)-SH + 2 reduced [2Fe-2S]-[ferredoxin] + 2 S-adenosyl-L-methionine = (sulfur carrier)-H + biotin + 2 5'-deoxyadenosine + 2 L-methionine + 2 oxidized [2Fe-2S]-[ferredoxin]. It functions in the pathway cofactor biosynthesis; biotin biosynthesis; biotin from 7,8-diaminononanoate: step 2/2. Catalyzes the conversion of dethiobiotin (DTB) to biotin by the insertion of a sulfur atom into dethiobiotin via a radical-based mechanism. In Escherichia coli O157:H7, this protein is Biotin synthase.